Consider the following 149-residue polypeptide: Protegrin-5 (149 aa).

The N-terminal stretch at 1–29 (METQRASLCLGRWSLWLLLLGLVVPSASA) is a signal peptide. The propeptide occupies 30-130 (QALSYREAVL…DITCNEVQGV (101 aa)). The interval 61–80 (DQPPKADEDPGTPKPVSFTV) is disordered. 4 disulfide bridges follow: cysteine 85/cysteine 96, cysteine 107/cysteine 124, cysteine 136/cysteine 145, and cysteine 138/cysteine 143. Position 148 is an arginine amide (arginine 148).

Belongs to the cathelicidin family.

It is found in the secreted. Microbicidal activity. The protein is Protegrin-5 (NPG5) of Sus scrofa (Pig).